Reading from the N-terminus, the 315-residue chain is CID domain-containing protein 1 (315 aa).

Positions 1–135 constitute a CID domain; the sequence is MADFTEQTLR…RLHEVHQQVK (135 aa). Positions 227–273 form a coiled coil; sequence MLEEYVKRLKNETNERETLESNLNMLIENVRMSIEHHEKLCREVKRR.

This Caenorhabditis elegans protein is CID domain-containing protein 1 (cids-1).